The sequence spans 640 residues: Probable potassium transport system protein Kup 3 (640 aa).

Residues 1 to 15 (MTVDAAATPAEAPAT) are compositionally biased toward low complexity. Positions 1-20 (MTVDAAATPAEAPATNGHGD) are disordered. 12 consecutive transmembrane segments (helical) span residues 30–50 (LTLGSIGVVYGDIGTSPLYAL), 71–91 (VISLILWALIVVVTLKYVVIL), 117–137 (ASIIVLLGIISGALFYGDAVI), 155–175 (AAFDPYVVPLTVIILAALFAV), 183–203 (VAAFFGPIMLIWFLVIGIAAF), 224–244 (FMLHHGIVGFITLGAVFLAVT), 265–285 (WLFVVLPSLALNYLGQGALII), 294–314 (PFFLMFPEWALIPMVALATVA), 363–383 (LLLASVVLLVLLFKSSSALAS), 385–405 (YGISVTGTMVVTAMMGFVVIW), 410–430 (WSPLAAGALIAPFLFLDLTFL), and 437–457 (VLEGGWVPLALGGFVMTLMYT).

This sequence belongs to the HAK/KUP transporter (TC 2.A.72) family.

It is found in the cell inner membrane. It catalyses the reaction K(+)(in) + H(+)(in) = K(+)(out) + H(+)(out). In terms of biological role, transport of potassium into the cell. Likely operates as a K(+):H(+) symporter. The protein is Probable potassium transport system protein Kup 3 of Bradyrhizobium sp. (strain BTAi1 / ATCC BAA-1182).